The chain runs to 201 residues: Small ribosomal subunit protein uS4 (201 aa).

Residues 20-46 (SGTGKELSRRPYAPGQHGQDRRGSLSE) form a disordered region. The 64-residue stretch at 93-156 (RRLDNVVYRL…KDLQIVKEAL (64 aa)) folds into the S4 RNA-binding domain.

The protein belongs to the universal ribosomal protein uS4 family. Part of the 30S ribosomal subunit. Contacts protein S5. The interaction surface between S4 and S5 is involved in control of translational fidelity.

Functionally, one of the primary rRNA binding proteins, it binds directly to 16S rRNA where it nucleates assembly of the body of the 30S subunit. With S5 and S12 plays an important role in translational accuracy. The chain is Small ribosomal subunit protein uS4 from Ligilactobacillus salivarius (strain UCC118) (Lactobacillus salivarius).